The primary structure comprises 150 residues: SsrA-binding protein (150 aa).

The protein belongs to the SmpB family.

The protein resides in the cytoplasm. Its function is as follows. Required for rescue of stalled ribosomes mediated by trans-translation. Binds to transfer-messenger RNA (tmRNA), required for stable association of tmRNA with ribosomes. tmRNA and SmpB together mimic tRNA shape, replacing the anticodon stem-loop with SmpB. tmRNA is encoded by the ssrA gene; the 2 termini fold to resemble tRNA(Ala) and it encodes a 'tag peptide', a short internal open reading frame. During trans-translation Ala-aminoacylated tmRNA acts like a tRNA, entering the A-site of stalled ribosomes, displacing the stalled mRNA. The ribosome then switches to translate the ORF on the tmRNA; the nascent peptide is terminated with the 'tag peptide' encoded by the tmRNA and targeted for degradation. The ribosome is freed to recommence translation, which seems to be the essential function of trans-translation. In Nitratiruptor sp. (strain SB155-2), this protein is SsrA-binding protein.